The sequence spans 668 residues: UvrABC system protein B (668 aa).

The 241-residue stretch at 36 to 276 folds into the Helicase ATP-binding domain; the sequence is DNIKGGEKAQ…EEAIKNIMEE (241 aa). Residue 49-56 participates in ATP binding; sequence GATGTGKT. Positions 102 to 125 match the Beta-hairpin motif; the sequence is YYDYYQPEAYVPSSDTYIEKDSSV. A Helicase C-terminal domain is found at 440 to 606; that stretch reads QMDDLLGEIN…TIKKEIRDLI (167 aa). The 36-residue stretch at 632-667 folds into the UVR domain; sequence QEAIKKLQKQMHEAAELLDFELAAQIRDMVLELKSM.

It belongs to the UvrB family. In terms of assembly, forms a heterotetramer with UvrA during the search for lesions. Interacts with UvrC in an incision complex.

The protein localises to the cytoplasm. Its function is as follows. The UvrABC repair system catalyzes the recognition and processing of DNA lesions. A damage recognition complex composed of 2 UvrA and 2 UvrB subunits scans DNA for abnormalities. Upon binding of the UvrA(2)B(2) complex to a putative damaged site, the DNA wraps around one UvrB monomer. DNA wrap is dependent on ATP binding by UvrB and probably causes local melting of the DNA helix, facilitating insertion of UvrB beta-hairpin between the DNA strands. Then UvrB probes one DNA strand for the presence of a lesion. If a lesion is found the UvrA subunits dissociate and the UvrB-DNA preincision complex is formed. This complex is subsequently bound by UvrC and the second UvrB is released. If no lesion is found, the DNA wraps around the other UvrB subunit that will check the other stand for damage. This Streptococcus thermophilus (strain ATCC BAA-491 / LMD-9) protein is UvrABC system protein B.